A 523-amino-acid chain; its full sequence is Glutamate--cysteine ligase (523 aa).

The protein belongs to the glutamate--cysteine ligase type 1 family. Type 1 subfamily.

The enzyme catalyses L-cysteine + L-glutamate + ATP = gamma-L-glutamyl-L-cysteine + ADP + phosphate + H(+). The protein operates within sulfur metabolism; glutathione biosynthesis; glutathione from L-cysteine and L-glutamate: step 1/2. The polypeptide is Glutamate--cysteine ligase (Baumannia cicadellinicola subsp. Homalodisca coagulata).